Here is a 333-residue protein sequence, read N- to C-terminus: MASLKDKLITPVAQPATQPTSKVTVVGVGQVGMACAISVLEKGLCDELALVDVLEDKLKGEMMDLQHGSLFLKTNKIVAGKDYAVTANSKVVVVTAGVRQQEGESRLDLVQRNVNVFKFIIPQVVKYSPDCIILVVSNPVDILTYVTWKLSGLPKHRVIGSGCNLDSARFRFLMGERLGIHPSSCHGWILGEHGDSSVAVWSGVNVAGVSLQELNPAMGSDQDSEGWKQVHKQVVDSAYEVIKLKGYTNWAIGLSVADLLETIMKNLCRVHPVSTMVKGMYGIENEVFLSLPCVLGSVGLTSVINQKLKDSEVAQLQTSATTLWNVQKDLKDL.

Residues 29–57 and R99 contribute to the NAD(+) site; that span reads GQVG…LEDK. The substrate site is built by R106, N138, and R169. NAD(+) is bound at residue N138. H193 functions as the Proton acceptor in the catalytic mechanism. T248 provides a ligand contact to substrate.

Belongs to the LDH/MDH superfamily. LDH family. Homotetramer.

It is found in the cytoplasm. The catalysed reaction is (S)-lactate + NAD(+) = pyruvate + NADH + H(+). It participates in fermentation; pyruvate fermentation to lactate; (S)-lactate from pyruvate: step 1/1. In terms of biological role, interconverts simultaneously and stereospecifically pyruvate and lactate with concomitant interconversion of NADH and NAD(+). The polypeptide is L-lactate dehydrogenase B chain (LDHB) (Sceloporus woodi (Florida scrub lizard)).